A 775-amino-acid chain; its full sequence is Melanoma-associated antigen D1 (775 aa).

A disordered region spans residues 37–330 (SEAPPTSQAT…PARQTPSAWQ (294 aa)). Residues 39–50 (APPTSQATAAAS) show a composition bias toward low complexity. Composition is skewed to polar residues over residues 52–63 (PNASPQSSQPPT), 84–100 (KAQNATTKGPNDYSQAR), 107–120 (KNQSKAAFKSQNGT), 149–178 (GQNSTKAGPGTTYNFPQSPSANEMTNNQPK), 221–235 (AQTSADGSQTQNVES), 247–258 (VNNLNVEENNSG), and 296–308 (LAWQNPSGWQNQT). 19 repeat units span residues 292-297 (WQTPLA), 298-303 (WQNPSG), 304-309 (WQNQTA), 329-334 (WQNPVA), 335-340 (WQNPVI), 341-346 (WPNPVI), 347-352 (WQNPVI), 353-358 (WPNPIV), 359-364 (WPGPIV), 365-370 (WPNPMA), 371-376 (WQSTPG), 377-382 (WQSPPS), 383-388 (WQAPPS), 389-394 (WQSPQD), 395-400 (WQGPPD), 401-406 (WQVPPD), 407-412 (WSMPPD), 413-418 (WSFPSD), and 419-424 (WPFPPD). Residues 292–441 (WQTPLAWQNP…IPPDWQNLRP (150 aa)) are 22 X 6 AA tandem repeats of W-[PQ]-X-P-X-X. Over residues 309–326 (ARQTPPAARQSPPARQTP) the composition is skewed to low complexity. The segment at 374–409 (TPGWQSPPSWQAPPSWQSPQDWQGPPDWQVPPDWSM) is disordered. Positions 375 to 406 (PGWQSPPSWQAPPSWQSPQDWQGPPDWQVPPD) are enriched in low complexity. The stretch at 425–429 (WIPAD) is one 20; approximate repeat. 2 repeat units span residues 430 to 435 (WPIPPD) and 436 to 441 (WQNLRP). A compositionally biased stretch (low complexity) spans 437 to 452 (QNLRPSPNLRSSSNSR). A disordered region spans residues 437-463 (QNLRPSPNLRSSSNSRASQNQGPPQPR). Residues 468–666 (LQERANKLVK…RDWTAQFMEA (199 aa)) form the MAGE domain.

As to quaternary structure, interacts with DLX5, DLX7 and MSX2 and forms homomultimers. Interacts with UNC5A. Interacts with TRIM28 and PJA1. Interacts with NGFR/p75NTR and RORA. Ubiquitously expressed in many adult tissues, except for the spleen. Expressed in osteoblastic and chondrogenic cell lines and also during embryonic development.

The protein resides in the nucleus. It is found in the cytoplasm. Its subcellular location is the cell membrane. Functionally, involved in the apoptotic response after nerve growth factor (NGF) binding in neuronal cells. Inhibits cell cycle progression, and facilitates NGFR-mediated apoptosis. May act as a regulator of the function of DLX family members. May enhance ubiquitin ligase activity of RING-type zinc finger-containing E3 ubiquitin-protein ligases. Proposed to act through recruitment and/or stabilization of the Ubl-conjugating enzyme (E2) at the E3:substrate complex. Plays a role in the circadian rhythm regulation. May act as RORA coregulator, modulating the expression of core clock genes such as BMAL1 and NFIL3, induced, or NR1D1, repressed. This chain is Melanoma-associated antigen D1 (Maged1), found in Mus musculus (Mouse).